Consider the following 189-residue polypeptide: GTP cyclohydrolase 1 (189 aa).

Positions 76, 79, and 149 each coordinate Zn(2+).

Belongs to the GTP cyclohydrolase I family. Toroid-shaped homodecamer, composed of two pentamers of five dimers.

It carries out the reaction GTP + H2O = 7,8-dihydroneopterin 3'-triphosphate + formate + H(+). Its pathway is cofactor biosynthesis; 7,8-dihydroneopterin triphosphate biosynthesis; 7,8-dihydroneopterin triphosphate from GTP: step 1/1. This is GTP cyclohydrolase 1 from Dehalococcoides mccartyi (strain ATCC BAA-2266 / KCTC 15142 / 195) (Dehalococcoides ethenogenes (strain 195)).